The sequence spans 263 residues: Phosphate import ATP-binding protein PstB (263 aa).

Positions 17–258 constitute an ABC transporter domain; that stretch reads IDVRDLNFYY…PRRKETEDYI (242 aa). 49-56 is an ATP binding site; the sequence is GPSGCGKS.

It belongs to the ABC transporter superfamily. Phosphate importer (TC 3.A.1.7) family. The complex is composed of two ATP-binding proteins (PstB), two transmembrane proteins (PstC and PstA) and a solute-binding protein (PstS).

Its subcellular location is the cell inner membrane. It carries out the reaction phosphate(out) + ATP + H2O = ADP + 2 phosphate(in) + H(+). In terms of biological role, part of the ABC transporter complex PstSACB involved in phosphate import. Responsible for energy coupling to the transport system. This is Phosphate import ATP-binding protein PstB from Ralstonia nicotianae (strain ATCC BAA-1114 / GMI1000) (Ralstonia solanacearum).